Reading from the N-terminus, the 188-residue chain is Ribosomal RNA small subunit methyltransferase G (188 aa).

S-adenosyl-L-methionine-binding positions include glycine 69, phenylalanine 74, 119 to 120 (VQ), and arginine 134.

It belongs to the methyltransferase superfamily. RNA methyltransferase RsmG family.

It localises to the cytoplasm. The enzyme catalyses guanosine(527) in 16S rRNA + S-adenosyl-L-methionine = N(7)-methylguanosine(527) in 16S rRNA + S-adenosyl-L-homocysteine. In terms of biological role, specifically methylates the N7 position of guanine in position 527 of 16S rRNA. In Campylobacter jejuni (strain RM1221), this protein is Ribosomal RNA small subunit methyltransferase G.